The following is a 316-amino-acid chain: N-acetyl-gamma-glutamyl-phosphate reductase (316 aa).

Residue cysteine 136 is part of the active site.

The protein belongs to the NAGSA dehydrogenase family. Type 1 subfamily.

It localises to the cytoplasm. The enzyme catalyses N-acetyl-L-glutamate 5-semialdehyde + phosphate + NADP(+) = N-acetyl-L-glutamyl 5-phosphate + NADPH + H(+). The protein operates within amino-acid biosynthesis; L-arginine biosynthesis; N(2)-acetyl-L-ornithine from L-glutamate: step 3/4. In terms of biological role, catalyzes the NADPH-dependent reduction of N-acetyl-5-glutamyl phosphate to yield N-acetyl-L-glutamate 5-semialdehyde. This is N-acetyl-gamma-glutamyl-phosphate reductase from Xanthomonas oryzae pv. oryzae (strain MAFF 311018).